We begin with the raw amino-acid sequence, 127 residues long: Copper resistance protein C (127 aa).

The N-terminal stretch at 1 to 25 is a signal peptide; that stretch reads MFAFRSIATTVVMVAASLASASAFA. Cu cation contacts are provided by histidine 26, methionine 65, methionine 68, methionine 71, methionine 76, and histidine 116.

Belongs to the CopC family.

The protein resides in the periplasm. Its function is as follows. Copper-binding protein involved in copper resistance. The polypeptide is Copper resistance protein C (Xanthomonas campestris pv. juglandis (Xanthomonas arboricola pv. juglandis)).